The primary structure comprises 814 residues: Ubiquitin carboxyl-terminal hydrolase 45 (814 aa).

The segment covering 1–14 (MRVKDPTKALPEKA) has biased composition (basic and acidic residues). The segment at 1 to 28 (MRVKDPTKALPEKAKRSKRPTVPHDEDS) is disordered. An interaction with ERCC1 region spans residues 1–62 (MRVKDPTKAL…AIAENLWSVC (62 aa)). Phosphoserine is present on residues S28 and S29. The segment at 36–153 (LTCQHVSHAI…AQIVDFLQKH (118 aa)) adopts a UBP-type zinc-finger fold. Zn(2+) contacts are provided by C38, H40, C62, C65, C85, C88, C93, H101, H105, H114, C127, and C130. Residues 190-813 (RGITNLGNTC…QAYLLFYERV (624 aa)) form the USP domain. C199 serves as the catalytic Nucleophile. 2 disordered regions span residues 418-443 (IENI…IHDR) and 479-533 (ESRL…PDGP). A compositionally biased stretch (basic and acidic residues) spans 432-443 (SSKDKSQLIHDR). Residues S508 and S526 each carry the phosphoserine modification. The span at 515–527 (KQTGLFRSSSGSG) shows a compositional bias: polar residues. The active-site Proton acceptor is H746.

The protein belongs to the peptidase C19 family. As to quaternary structure, interacts with ERCC1. The catalytically active form interacts with SPDL1. In terms of tissue distribution, widely expressed. High expression is detected in the cerebellum. In the eye, it is expressed at high levels in the optic nerve, sclera and retina, with relatively low levels in the choroid, lens and retinal pigment epithelium.

The protein localises to the photoreceptor inner segment. Its subcellular location is the cytoplasm. The protein resides in the nucleus. The enzyme catalyses Thiol-dependent hydrolysis of ester, thioester, amide, peptide and isopeptide bonds formed by the C-terminal Gly of ubiquitin (a 76-residue protein attached to proteins as an intracellular targeting signal).. Its function is as follows. Catalyzes the deubiquitination of SPDL1. Plays a role in the repair of UV-induced DNA damage via deubiquitination of ERCC1, promoting its recruitment to DNA damage sites. May be involved in the maintenance of photoreceptor function. May play a role in normal retinal development. Plays a role in cell migration. The chain is Ubiquitin carboxyl-terminal hydrolase 45 (USP45) from Homo sapiens (Human).